Reading from the N-terminus, the 509-residue chain is Monofunctional riboflavin biosynthesis protein RIBA 3, chloroplastic (509 aa).

A chloroplast-targeting transit peptide spans 1 to 43; sequence MMDSALYHPRIFFAHSFINGLYSSPRFANTCWRLVSRSSWEIK. Positions 44–302 are inactive DHBP synthase; it reads ASENSDRNVF…LTDLIRYRRK (259 aa). D-ribulose 5-phosphate is bound by residues 125 to 126 and 240 to 244; these read GD and RAGHT. The interval 303–509 is GTP cyclohydrolase II; it reads RDKLVERITV…ISDNNDQPLA (207 aa). 353-357 serves as a coordination point for GTP; it reads RVHSE. Zn(2+)-binding residues include cysteine 358, cysteine 369, and cysteine 371. GTP is bound by residues glutamine 374, 397 to 399, and threonine 419; that span reads EGR. Catalysis depends on aspartate 431, which acts as the Proton acceptor; for GTP cyclohydrolase activity. The active-site Nucleophile; for GTP cyclohydrolase activity is arginine 433. GTP is bound by residues threonine 454 and lysine 459.

It in the N-terminal section; belongs to the DHBP synthase family. This sequence in the C-terminal section; belongs to the GTP cyclohydrolase II family. It depends on Zn(2+) as a cofactor. As to expression, expressed in leaves, shoots, roots, flowers and siliques.

The protein resides in the plastid. The protein localises to the chloroplast. It carries out the reaction GTP + 4 H2O = 2,5-diamino-6-hydroxy-4-(5-phosphoribosylamino)-pyrimidine + formate + 2 phosphate + 3 H(+). It participates in cofactor biosynthesis; riboflavin biosynthesis; 5-amino-6-(D-ribitylamino)uracil from GTP: step 1/4. Functionally, involved in riboflavin biosynthesis. Catalyzes the conversion of GTP to 2,5-diamino-6-ribosylamino-4(3H)-pyrimidinone 5'-phosphate (DARP), formate and pyrophosphate. RIBA2 and RIBA3 together are not able to complement the loss of function of RIBA1. The sequence is that of Monofunctional riboflavin biosynthesis protein RIBA 3, chloroplastic (RIBA3) from Arabidopsis thaliana (Mouse-ear cress).